We begin with the raw amino-acid sequence, 348 residues long: Protein RecA (348 aa).

66–73 (GPESSGKT) is a binding site for ATP.

Belongs to the RecA family.

It is found in the cytoplasm. Can catalyze the hydrolysis of ATP in the presence of single-stranded DNA, the ATP-dependent uptake of single-stranded DNA by duplex DNA, and the ATP-dependent hybridization of homologous single-stranded DNAs. It interacts with LexA causing its activation and leading to its autocatalytic cleavage. This is Protein RecA from Burkholderia lata (strain ATCC 17760 / DSM 23089 / LMG 22485 / NCIMB 9086 / R18194 / 383).